Consider the following 155-residue polypeptide: Ubiquitin-conjugating enzyme E2 14 (155 aa).

One can recognise a UBC core domain in the interval 7–154 (SSSRRLTKEY…ARDYVEQFAK (148 aa)). Residue cysteine 91 is the Glycyl thioester intermediate of the active site.

This sequence belongs to the ubiquitin-conjugating enzyme family.

It carries out the reaction S-ubiquitinyl-[E1 ubiquitin-activating enzyme]-L-cysteine + [E2 ubiquitin-conjugating enzyme]-L-cysteine = [E1 ubiquitin-activating enzyme]-L-cysteine + S-ubiquitinyl-[E2 ubiquitin-conjugating enzyme]-L-cysteine.. It participates in protein modification; protein ubiquitination. Functionally, catalyzes the covalent attachment of ubiquitin to other proteins. Mediates the selective degradation of short-lived and abnormal proteins. This is Ubiquitin-conjugating enzyme E2 14 (ubc14) from Schizosaccharomyces pombe (strain 972 / ATCC 24843) (Fission yeast).